The chain runs to 322 residues: tRNA-dihydrouridine synthase B (322 aa).

FMN is bound by residues proline 16 to alanine 18 and glutamine 70. Cysteine 100 serves as the catalytic Proton donor. Residues lysine 139, asparagine 200–aspartate 202, and glycine 224–arginine 225 contribute to the FMN site.

This sequence belongs to the Dus family. DusB subfamily. The cofactor is FMN.

It catalyses the reaction a 5,6-dihydrouridine in tRNA + NAD(+) = a uridine in tRNA + NADH + H(+). The enzyme catalyses a 5,6-dihydrouridine in tRNA + NADP(+) = a uridine in tRNA + NADPH + H(+). Functionally, catalyzes the synthesis of 5,6-dihydrouridine (D), a modified base found in the D-loop of most tRNAs, via the reduction of the C5-C6 double bond in target uridines. The polypeptide is tRNA-dihydrouridine synthase B (Vibrio parahaemolyticus serotype O3:K6 (strain RIMD 2210633)).